A 222-amino-acid polypeptide reads, in one-letter code: Thiopurine S-methyltransferase (222 aa).

Tryptophan 10, leucine 45, glutamate 66, and arginine 126 together coordinate S-adenosyl-L-methionine.

This sequence belongs to the class I-like SAM-binding methyltransferase superfamily. TPMT family.

It is found in the cytoplasm. It catalyses the reaction S-adenosyl-L-methionine + a thiopurine = S-adenosyl-L-homocysteine + a thiopurine S-methylether.. The sequence is that of Thiopurine S-methyltransferase from Shewanella piezotolerans (strain WP3 / JCM 13877).